We begin with the raw amino-acid sequence, 542 residues long: Mitochondrial distribution and morphology protein 34 (542 aa).

The region spanning 1–216 is the SMP-LTD domain; the sequence is MSFRFNKGAF…LPSVIFSMSQ (216 aa). Disordered stretches follow at residues 27–58 and 372–435; these read LNSK…TRGP and SSGD…TTAV. Residues 31 to 48 show a composition bias toward low complexity; the sequence is TQSSSQTAPANTTNSAAT. Basic and acidic residues predominate over residues 49 to 58; it reads DEVKQETRGP. A compositionally biased stretch (basic residues) spans 379-394; that stretch reads IRRRKIKMGKKSKSKK. The span at 403-414 shows a compositional bias: low complexity; it reads SSPTVVMPSSPS.

This sequence belongs to the MDM34 family. Component of the ER-mitochondria encounter structure (ERMES) or MDM complex, composed of MMM1, MDM10, MDM12 and MDM34.

The protein localises to the mitochondrion outer membrane. Its function is as follows. Component of the ERMES/MDM complex, which serves as a molecular tether to connect the endoplasmic reticulum (ER) and mitochondria. Components of this complex are involved in the control of mitochondrial shape and protein biogenesis, and function in nonvesicular lipid trafficking between the ER and mitochondria. MDM34 is required for the interaction of the ER-resident membrane protein MMM1 and the outer mitochondrial membrane-resident beta-barrel protein MDM10. This Lachancea thermotolerans (strain ATCC 56472 / CBS 6340 / NRRL Y-8284) (Yeast) protein is Mitochondrial distribution and morphology protein 34.